The chain runs to 457 residues: Peptidyl-prolyl cis-trans isomerase FKBP5 (457 aa).

Met1 is subject to N-acetylmethionine. A compositionally biased stretch (basic and acidic residues) spans 1–11; that stretch reads MTTDEGAKSSR. Residues 1–28 form a disordered region; it reads MTTDEGAKSSRENPAATVAEQGEDVTSK. The residue at position 28 (Lys28) is an N6-acetyllysine. 2 PPIase FKBP-type domains span residues 50–138 and 165–251; these read GDKV…LNFK and GARV…KSFE. 3 TPR repeats span residues 268–301, 317–350, and 351–384; these read AAIVKEEGTVYFKGGKYVQAVIQYGKIVSWLEME, LAAFLNLAMCYLKLREYAKAVECCDKALGLDSAN, and EKGLYRRGEAQLLMNEFESAKGDFEKVLEVNPQN. The tract at residues 424–457 is disordered; that stretch reads EANKAVSKKTSEGVTNEKLTVSHAVEEEKPEGHV. At Ser445 the chain carries Phosphoserine. A compositionally biased stretch (basic and acidic residues) spans 447 to 457; it reads AVEEEKPEGHV.

In terms of assembly, part of a heteromultimeric cytoplasmic complex with HSP90AA1, HSPA1A/HSPA1B and steroid receptors. Upon ligand binding dissociates from the complex and FKBP4 takes its place. Interacts with functionally mature heterooligomeric progesterone receptor complexes along with HSP90 and TEBP. Interacts with NR3C1. Interacts with Akt/AKT1 and PHLPP1; enhancing dephosphorylation and subsequent activation of Akt/AKT1. Interacts with IFI44L; this interaction modulates the kinase activity of IKBKB and IKBKE. Interacts with IKBKB and IKBKE. Post-translationally, acetylation impairs ability to promote interaction between Akt/AKT1 and PHLPP1. Deacetylation by SIRT7 promotes interaction between Akt/AKT1 and PHLPP1, leading to suppress Akt/AKT1 activation. In terms of processing, ubiquitinated, leading to degradation in a proteasome-dependent manner. Deubiquitinated by USP49, leading to stabilization.

It localises to the cytoplasm. The protein resides in the nucleus. It carries out the reaction [protein]-peptidylproline (omega=180) = [protein]-peptidylproline (omega=0). With respect to regulation, inhibited by both FK506 and rapamycin. Functionally, immunophilin protein with PPIase and co-chaperone activities. Component of unligated steroid receptors heterocomplexes through interaction with heat-shock protein 90 (HSP90). Plays a role in the intracellular trafficking of heterooligomeric forms of steroid hormone receptors maintaining the complex into the cytoplasm when unliganded. Acts as a regulator of Akt/AKT1 activity by promoting the interaction between Akt/AKT1 and PHLPP1, thereby enhancing dephosphorylation and subsequent activation of Akt/AKT1. Interacts with IKBKE and IKBKB which facilitates IKK complex assembly leading to increased IKBKE and IKBKB kinase activity, NF-kappaB activation, and IFN production. The chain is Peptidyl-prolyl cis-trans isomerase FKBP5 (FKBP5) from Saguinus oedipus (Cotton-top tamarin).